Reading from the N-terminus, the 121-residue chain is Phospholipase A2 homolog ECO_00035 (121 aa).

7 disulfide bridges follow: Cys25–Cys114, Cys27–Cys43, Cys42–Cys94, Cys48–Cys121, Cys49–Cys87, Cys56–Cys80, and Cys74–Cys85. The important for membrane-damaging activities in eukaryotes and bacteria; heparin-binding stretch occupies residues 104–116; that stretch reads KKYKIYPNILCRG.

Belongs to the phospholipase A2 family. Group II subfamily. S49 sub-subfamily. In terms of assembly, monomer. In terms of tissue distribution, expressed by the venom gland.

It is found in the secreted. Its function is as follows. Snake venom phospholipase A2 homolog that lacks enzymatic activity. Shows high myotoxin activities and displays edema-inducing activities. Has cytotoxic activities against HUVEC cells (LC(50)=4.9 uL) and human lung adenocarcinoma A549 cells (LC(50)=3.5 uL). In Echis coloratus (Carpet viper), this protein is Phospholipase A2 homolog ECO_00035.